A 273-amino-acid polypeptide reads, in one-letter code: Phosphatidylglycerol--prolipoprotein diacylglyceryl transferase (273 aa).

Helical transmembrane passes span Ile18 to Gly38, Leu47 to Ala67, Ile89 to Ile109, and Val116 to Gly136. Arg137 contributes to the a 1,2-diacyl-sn-glycero-3-phospho-(1'-sn-glycerol) binding site. The next 3 membrane-spanning stretches (helical) occupy residues Val178 to Ile198, Gly207 to Met227, and Leu238 to Tyr258.

It belongs to the Lgt family.

It localises to the cell membrane. The enzyme catalyses L-cysteinyl-[prolipoprotein] + a 1,2-diacyl-sn-glycero-3-phospho-(1'-sn-glycerol) = an S-1,2-diacyl-sn-glyceryl-L-cysteinyl-[prolipoprotein] + sn-glycerol 1-phosphate + H(+). It functions in the pathway protein modification; lipoprotein biosynthesis (diacylglyceryl transfer). Its function is as follows. Catalyzes the transfer of the diacylglyceryl group from phosphatidylglycerol to the sulfhydryl group of the N-terminal cysteine of a prolipoprotein, the first step in the formation of mature lipoproteins. In Lysinibacillus sphaericus (strain C3-41), this protein is Phosphatidylglycerol--prolipoprotein diacylglyceryl transferase.